Consider the following 745-residue polypeptide: MSLKPRVVDFDETWNKLLTTIKAVVMLEYVERATWNDRFSDIYALCVAYPEPLGERLYTETKIFLENHVRHLHKRVLESEEQVLVMYHRYWEEYSKGADYMDCLYRYLNTQFIKKNKLTEADLQYGYGGVDMNEPLMEIGELALDMWRKLMVEPLQAILIRMLLREIKNDRGGEDPNQKVIHGVINSFVHVEQYKKKFPLKFYQEIFESPFLTETGEYYKQEASNLLQESNCSQYMEKVLGRLKDEEIRCRKYLHPSSYTKVIHECQQRMVADHLQFLHAECHNIIRQEKKNDMANMYVLLRAVSTGLPHMIQELQNHIHDEGLRATSNLTQENMPTLFVESVLEVHGKFVQLINTVLNGDQHFMSALDKALTSVVNYREPKSVCKAPELLAKYCDNLLKKSAKGMTENEVEDRLTSFITVFKYIDDKDVFQKFYARMLAKRLIHGLSMSMDSEEAMINKLKQACGYEFTSKLHRMYTDMSVSADLNNKFNNFIKNQDTVIDLGISFQIYVLQAGAWPLTQAPSSTFAIPQELEKSVQMFELFYSQHFSGRKLTWLHYLCTGEVKMNYLGKPYVAMVTTYQMAVLLAFNNSETVSYKELQDSTQMNEKELTKTIKSLLDVKMINHDSEKEDIDAESSFSLNMNFSSKRTKFKITTSMQKDTPQEMEQTRSAVDEDRKMYLQAAIVRIMKARKVLRHNALIQEVISQSRARFNPSISMIKKCIEVLIDKQYIERSQASADEYSYVA.

The residue at position 393 (Lys-393) is an N6-acetyllysine. At Thr-661 the chain carries Phosphothreonine. Positions 675 to 735 (DRKMYLQAAI…IDKQYIERSQ (61 aa)) constitute a Cullin neddylation domain. A Glycyl lysine isopeptide (Lys-Gly) (interchain with G-Cter in NEDD8) cross-link involves residue Lys-689.

The protein belongs to the cullin family. As to quaternary structure, component of multiple Cul2-RING (CRL2) E3 ubiquitin-protein ligase complexes consisting of CUL2, Elongin BC (ELOB and ELOC), RBX1 and a variable substrate-specific adapter; this complex is also known as ECS (Elongin BC-CUL2/5-SOCS-box protein) complex and may consist of CUL2 or CUL5. Component of the ECS(VHL) or CBC(VHL) complex containing CUL2, RBX1, ELOB, ELOC and VHL. Component of the ECS(MED8) complex with the probable substrate recognition component MED8. Component of multiple ECS complexes part of the DesCEND (destruction via C-end degrons) pathway, which contain either KLHDC2, KLHDC3, KLHDC10, APPBP2, FEM1A, FEM1B or FEM1C as substrate-recognition component. Component of the ECS(LRR1) complex with the substrate recognition component LRR1. Component of a CRL2(FEM1B) complex containing CUL2, RBX1, ELOB, ELOC and FEM1B. Component of a CRL2(FEM1C) complex containing CUL2, RBX1, ELOB, ELOC and FEM1C. Part of an E3 ubiquitin-protein ligase complex including ZYG11B, CUL2 and Elongin BC. Part of an E3 ubiquitin-protein ligase complex including ZER1, CUL2 and Elongin BC. Interacts with RBX1, RNF7, FEM1B and TIP120A/CAND1. Found in a complex composed of LIMD1, VHL, EGLN1/PHD2, ELOB and CUL2. Interacts (when neddylated) with ARIH1; leading to activate the E3 ligase activity of ARIH1. Interacts (unneddylated form) with DCUN1D1, DCUN1D2, DCUN1D3, DCUN1D4 and DCUN1D5; these interactions promote the cullin neddylation. Component of VCB (elongins BC/CUL2/VHL) complex that contains at least DCUN1D1, CUL2 and VHL; this complex triggers CUL2 neddylation and consequently cullin ring ligase (CRL) substrates polyubiquitylation. Neddylated; which enhances the ubiquitination activity of ECS (Elongin BC-CUL2/5-SOCS-box protein) E3 ubiquitin-protein ligase complexes. Neddylation leads to structural rearrangment in the complex that allows interaction between the E2 ubiquitin-conjugating enzyme and the acceptor ubiquitin. CBC(VHL) complex formation seems to promote neddylation. Deneddylated via its interaction with the COP9 signalosome (CSN) complex.

Its subcellular location is the nucleus. Its pathway is protein modification; protein ubiquitination. Its function is as follows. Core component of multiple cullin-RING-based ECS (ElonginB/C-CUL2/5-SOCS-box protein) E3 ubiquitin-protein ligase complexes, which mediate the ubiquitination of target proteins. CUL2 may serve as a rigid scaffold in the complex and may contribute to catalysis through positioning of the substrate and the ubiquitin-conjugating enzyme. The E3 ubiquitin-protein ligase activity of the complex is dependent on the neddylation of the cullin subunit and is inhibited by the association of the deneddylated cullin subunit with TIP120A/CAND1. The functional specificity of the ECS complex depends on the substrate recognition component. ECS(VHL) mediates the ubiquitination of hypoxia-inducible factor (HIF). A number of ECS complexes (containing either KLHDC2, KLHDC3, KLHDC10, APPBP2, FEM1A, FEM1B or FEM1C as substrate-recognition component) are part of the DesCEND (destruction via C-end degrons) pathway, which recognizes a C-degron located at the extreme C terminus of target proteins, leading to their ubiquitination and degradation. ECS complexes and ARIH1 collaborate in tandem to mediate ubiquitination of target proteins. ECS(LRR1) ubiquitinates MCM7 and promotes CMG replisome disassembly by VCP and chromatin extraction during S-phase. This chain is Cullin-2 (CUL2), found in Pongo abelii (Sumatran orangutan).